A 675-amino-acid polypeptide reads, in one-letter code: Rho guanine nucleotide exchange factor 37 (675 aa).

The tract at residues 1–26 (MAKHGADEPSSRSGSPDREGRASEDR) is disordered. The DH domain occupies 30–213 (HQRLAVRELI…QDVNTNINEY (184 aa)). Residues 254–455 (LKQEAGLIPR…LPHHHVPEPA (202 aa)) form the BAR domain. SH3 domains lie at 506 to 569 (GPGK…LYHV) and 602 to 665 (PTMN…RARS).

In terms of biological role, may act as a guanine nucleotide exchange factor (GEF). This is Rho guanine nucleotide exchange factor 37 (ARHGEF37) from Homo sapiens (Human).